We begin with the raw amino-acid sequence, 293 residues long: 4-hydroxy-tetrahydrodipicolinate synthase 1 (293 aa).

Pyruvate is bound at residue Thr-46. Residue Tyr-134 is the Proton donor/acceptor of the active site. The active-site Schiff-base intermediate with substrate is the Lys-162. Residue Ile-204 participates in pyruvate binding.

The protein belongs to the DapA family. In terms of assembly, homotetramer; dimer of dimers.

Its subcellular location is the cytoplasm. It carries out the reaction L-aspartate 4-semialdehyde + pyruvate = (2S,4S)-4-hydroxy-2,3,4,5-tetrahydrodipicolinate + H2O + H(+). It functions in the pathway amino-acid biosynthesis; L-lysine biosynthesis via DAP pathway; (S)-tetrahydrodipicolinate from L-aspartate: step 3/4. In terms of biological role, catalyzes the condensation of (S)-aspartate-beta-semialdehyde [(S)-ASA] and pyruvate to 4-hydroxy-tetrahydrodipicolinate (HTPA). The polypeptide is 4-hydroxy-tetrahydrodipicolinate synthase 1 (Clostridium acetobutylicum (strain ATCC 824 / DSM 792 / JCM 1419 / IAM 19013 / LMG 5710 / NBRC 13948 / NRRL B-527 / VKM B-1787 / 2291 / W)).